The sequence spans 301 residues: Probable alpha-L-glutamate ligase 1 (301 aa).

The region spanning 104-287 (MQLMSRRGIG…VAGAIIEFVE (184 aa)) is the ATP-grasp domain. Residues Lys141, 178-179 (EY), Asp187, and 211-213 (RSN) each bind ATP. Asp248, Glu260, and Asn262 together coordinate Mg(2+). Mn(2+) is bound by residues Asp248, Glu260, and Asn262.

The protein belongs to the RimK family. Mg(2+) is required as a cofactor. It depends on Mn(2+) as a cofactor.

The protein is Probable alpha-L-glutamate ligase 1 of Shewanella putrefaciens (strain CN-32 / ATCC BAA-453).